The chain runs to 451 residues: NADP-specific glutamate dehydrogenase (451 aa).

The active site involves Lys113. A Phosphoserine modification is found at Ser252.

This sequence belongs to the Glu/Leu/Phe/Val dehydrogenases family. As to quaternary structure, homohexamer.

It carries out the reaction L-glutamate + NADP(+) + H2O = 2-oxoglutarate + NH4(+) + NADPH + H(+). The polypeptide is NADP-specific glutamate dehydrogenase (gdh1) (Schizosaccharomyces pombe (strain 972 / ATCC 24843) (Fission yeast)).